Reading from the N-terminus, the 437-residue chain is uncharacterized protein (437 aa).

Phosphoserine is present on residues Ser-290 and Ser-293. Thr-296 is subject to Phosphothreonine. 2 positions are modified to phosphoserine: Ser-418 and Ser-428.

This is an uncharacterized protein from Schizosaccharomyces pombe (strain 972 / ATCC 24843) (Fission yeast).